A 321-amino-acid polypeptide reads, in one-letter code: Lipoyl synthase (321 aa).

The [4Fe-4S] cluster site is built by Cys-68, Cys-73, Cys-79, Cys-94, Cys-98, Cys-101, and Ser-308. In terms of domain architecture, Radical SAM core spans 80-297 (FNHGTATFMI…KVLADELGFT (218 aa)).

It belongs to the radical SAM superfamily. Lipoyl synthase family. [4Fe-4S] cluster serves as cofactor.

It is found in the cytoplasm. The enzyme catalyses [[Fe-S] cluster scaffold protein carrying a second [4Fe-4S](2+) cluster] + N(6)-octanoyl-L-lysyl-[protein] + 2 oxidized [2Fe-2S]-[ferredoxin] + 2 S-adenosyl-L-methionine + 4 H(+) = [[Fe-S] cluster scaffold protein] + N(6)-[(R)-dihydrolipoyl]-L-lysyl-[protein] + 4 Fe(3+) + 2 hydrogen sulfide + 2 5'-deoxyadenosine + 2 L-methionine + 2 reduced [2Fe-2S]-[ferredoxin]. The protein operates within protein modification; protein lipoylation via endogenous pathway; protein N(6)-(lipoyl)lysine from octanoyl-[acyl-carrier-protein]: step 2/2. Catalyzes the radical-mediated insertion of two sulfur atoms into the C-6 and C-8 positions of the octanoyl moiety bound to the lipoyl domains of lipoate-dependent enzymes, thereby converting the octanoylated domains into lipoylated derivatives. This Shewanella sp. (strain MR-7) protein is Lipoyl synthase.